The chain runs to 324 residues: Methionyl-tRNA formyltransferase (324 aa).

113–116 (SLLP) provides a ligand contact to (6S)-5,6,7,8-tetrahydrofolate.

It belongs to the Fmt family.

It carries out the reaction L-methionyl-tRNA(fMet) + (6R)-10-formyltetrahydrofolate = N-formyl-L-methionyl-tRNA(fMet) + (6S)-5,6,7,8-tetrahydrofolate + H(+). Functionally, attaches a formyl group to the free amino group of methionyl-tRNA(fMet). The formyl group appears to play a dual role in the initiator identity of N-formylmethionyl-tRNA by promoting its recognition by IF2 and preventing the misappropriation of this tRNA by the elongation apparatus. In Bacteroides fragilis (strain ATCC 25285 / DSM 2151 / CCUG 4856 / JCM 11019 / LMG 10263 / NCTC 9343 / Onslow / VPI 2553 / EN-2), this protein is Methionyl-tRNA formyltransferase.